A 613-amino-acid polypeptide reads, in one-letter code: UvrABC system protein C (613 aa).

In terms of domain architecture, GIY-YIG spans 20–98 (ERPGVYLMYD…IKRHKPRYNI (79 aa)). Residues 209 to 244 (FDVIESLGHKMQQASDEFEFEKAALYRDKISALRAI) enclose the UVR domain.

It belongs to the UvrC family. In terms of assembly, interacts with UvrB in an incision complex.

The protein localises to the cytoplasm. The UvrABC repair system catalyzes the recognition and processing of DNA lesions. UvrC both incises the 5' and 3' sides of the lesion. The N-terminal half is responsible for the 3' incision and the C-terminal half is responsible for the 5' incision. This Hydrogenovibrio crunogenus (strain DSM 25203 / XCL-2) (Thiomicrospira crunogena) protein is UvrABC system protein C.